The sequence spans 363 residues: Serpentine receptor class T-55 (363 aa).

A signal peptide spans 1–18 (MKLRHFLIFLMLIPISSS). 7 consecutive transmembrane segments (helical) span residues 70–90 (IYYISSGLFFQLIGWPVIWVF), 107–127 (VFIGLIEITEIWGNSVFPGFV), 143–163 (IVGKMTMVQWVLGSSSAAFLG), 187–207 (WLTVLFFYACYGSIFFDTVLF), 231–251 (FLYFHNIIVATTLILVYACLC), 278–298 (ICISLTYAIPAISFVTMFVLP), and 303–323 (FFHVSDITYQLSGGLPFIMYI).

Belongs to the nematode receptor-like protein srt family.

It localises to the membrane. The sequence is that of Serpentine receptor class T-55 (srt-55) from Caenorhabditis elegans.